A 567-amino-acid polypeptide reads, in one-letter code: MSRISRQAYADMFGPTVGDRVRLADTALWVEVEKDFTVYGEEVKFGGGKVIRDGMGQGQMLAAEAMDLVLTNALIIDHWGIVKADIGVKHGRIAAIGKAGNPDVQPGVSVPVGPGTEVIAAEGKIVTAGGIDSHIHFICPQQVEEALTSGVTTFIGGGTGPATGTNATTCTPGPWYLARMLQAADSLPINIGLLGKGNASRPEALREQITAGAVGLKLHEDWGSTPAAIDCCLGVAEEMDIQVAIHTDTLNESGCIEDTLSAIGDRTIHTFHTEGAGGGHAPDIIRAAGQANVLPSSTNPTLPYTVNTVDEHLDMLMVCHHLDPSIAEDVAFAESRIRRETIAAEDILHDMGAFAMTSSDSQAMGRVGEVVLRTWQVAHQMKLRRGPLAPDGSYSDNFRVKRYIAKYTINPALTHGIAHEVGSVEVGKLADLVLWAPAFFAVKPALVLKGGMIATAPMGDINGSIPTPQPVHYRPMFGALGAARHTTRMTFLPQAAMDRGLAEELNLQSLIGVAHGCRRVRKADMVHNTLQPLIEVDAQTYQVRADGELLVCEPARELPLAQRYFLF.

The 439-residue stretch at 129–567 (GGIDSHIHFI…LPLAQRYFLF (439 aa)) folds into the Urease domain. Ni(2+)-binding residues include His134, His136, and Lys217. Lys217 carries the N6-carboxylysine modification. His219 contributes to the substrate binding site. Ni(2+) is bound by residues His246 and His272. His320 acts as the Proton donor in catalysis. Asp360 provides a ligand contact to Ni(2+).

The protein belongs to the metallo-dependent hydrolases superfamily. Urease alpha subunit family. As to quaternary structure, heterotrimer of UreA (gamma), UreB (beta) and UreC (alpha) subunits. Three heterotrimers associate to form the active enzyme. The cofactor is Ni cation. Post-translationally, carboxylation allows a single lysine to coordinate two nickel ions.

It is found in the cytoplasm. The catalysed reaction is urea + 2 H2O + H(+) = hydrogencarbonate + 2 NH4(+). It functions in the pathway nitrogen metabolism; urea degradation; CO(2) and NH(3) from urea (urease route): step 1/1. This Pseudomonas entomophila (strain L48) protein is Urease subunit alpha.